The following is a 457-amino-acid chain: Antizyme inhibitor 2 (457 aa).

Residues 115–138 form a necessary for polyamine uptake stimulation region; that stretch reads QVAQIKYAAKHGVRLLSFDNEVEL.

The protein belongs to the Orn/Lys/Arg decarboxylase class-II family. ODC antizyme inhibitor subfamily. As to quaternary structure, monomer. Interacts with OAZ1, OAZ2 and OAZ3; this interaction disrupts the interaction between the antizyme and ODC1. Does not form a heterodimer with ODC1. Ubiquitinated, leading to its proteasomal degradation; a process that is reduced in presence of antizymes. May also be degraded through the lysosomal degradative pathway in a proteasomal-independent manner.

The protein resides in the nucleus. The protein localises to the cytoplasm. It is found in the perinuclear region. It localises to the membrane. Its subcellular location is the cytoplasmic vesicle. The protein resides in the endoplasmic reticulum-Golgi intermediate compartment. The protein localises to the golgi apparatus. It is found in the cis-Golgi network. It localises to the trans-Golgi network. Its subcellular location is the cytoplasmic granule. The protein resides in the cell projection. The protein localises to the axon. It is found in the dendrite. It localises to the perikaryon. In terms of biological role, antizyme inhibitor (AZI) protein that positively regulates ornithine decarboxylase (ODC) activity and polyamine uptake. AZI is an enzymatically inactive ODC homolog that counteracts the negative effect of ODC antizymes (AZs) OAZ1, OAZ2 and OAZ3 on ODC activity by competing with ODC for antizyme-binding. Inhibits antizyme-dependent ODC degradation and releases ODC monomers from their inactive complex with antizymes, leading to formation of the catalytically active ODC homodimer and restoring polyamine production. Participates in the morphological integrity of the trans-Golgi network (TGN) and functions as a regulator of intracellular secretory vesicle trafficking. The polypeptide is Antizyme inhibitor 2 (Azin2) (Rattus norvegicus (Rat)).